The chain runs to 67 residues: Large ribosomal subunit protein uL29 (67 aa).

This sequence belongs to the universal ribosomal protein uL29 family.

The polypeptide is Large ribosomal subunit protein uL29 (Ehrlichia canis (strain Jake)).